Reading from the N-terminus, the 197-residue chain is Holliday junction branch migration complex subunit RuvA (197 aa).

Positions 1–65 (MISQVRGTIM…EDAWHLYGFA (65 aa)) are domain I. The domain II stretch occupies residues 66-140 (HAYERAVFQK…DKIDAVGPAP (75 aa)). Residues 140–144 (PATGT) are flexible linker. The interval 145-197 (APSPLGDDAVRALIALGYNQTEADRAVRAVVESGAPKDVSSLVRGALSRLTAK) is domain III.

This sequence belongs to the RuvA family. Homotetramer. Forms an RuvA(8)-RuvB(12)-Holliday junction (HJ) complex. HJ DNA is sandwiched between 2 RuvA tetramers; dsDNA enters through RuvA and exits via RuvB. An RuvB hexamer assembles on each DNA strand where it exits the tetramer. Each RuvB hexamer is contacted by two RuvA subunits (via domain III) on 2 adjacent RuvB subunits; this complex drives branch migration. In the full resolvosome a probable DNA-RuvA(4)-RuvB(12)-RuvC(2) complex forms which resolves the HJ.

It is found in the cytoplasm. Functionally, the RuvA-RuvB-RuvC complex processes Holliday junction (HJ) DNA during genetic recombination and DNA repair, while the RuvA-RuvB complex plays an important role in the rescue of blocked DNA replication forks via replication fork reversal (RFR). RuvA specifically binds to HJ cruciform DNA, conferring on it an open structure. The RuvB hexamer acts as an ATP-dependent pump, pulling dsDNA into and through the RuvAB complex. HJ branch migration allows RuvC to scan DNA until it finds its consensus sequence, where it cleaves and resolves the cruciform DNA. The polypeptide is Holliday junction branch migration complex subunit RuvA (Gemmatimonas aurantiaca (strain DSM 14586 / JCM 11422 / NBRC 100505 / T-27)).